We begin with the raw amino-acid sequence, 525 residues long: Averantin hydroxylase (525 aa).

A helical membrane pass occupies residues 36 to 56 (VLATFVAGIGALLLWTLTTVF). Asn-315 carries N-linked (GlcNAc...) asparagine glycosylation. Cys-462 is a binding site for heme.

The protein belongs to the cytochrome P450 family. It depends on heme as a cofactor.

The protein localises to the membrane. It catalyses the reaction (1'S)-averantin + reduced [NADPH--hemoprotein reductase] + O2 = (1'S,5'R)-5'-hydroxyaverantin + oxidized [NADPH--hemoprotein reductase] + H2O. The catalysed reaction is (1'S)-averantin + reduced [NADPH--hemoprotein reductase] + O2 = (1'S,5'S)-5'-hydroxyaverantin + oxidized [NADPH--hemoprotein reductase] + H2O + H(+). Its pathway is mycotoxin biosynthesis. Its function is as follows. Averantin hydroxylase; part of the fragmented gene cluster that mediates the biosynthesis of dothistromin (DOTH), a polyketide toxin very similar in structure to the aflatoxin precursor, versicolorin B. The first step of the pathway is the conversion of acetate to norsolorinic acid (NOR) and requires the fatty acid synthase subunits hexA and hexB, as well as the polyketide synthase pksA. PksA combines a hexanoyl starter unit and 7 malonyl-CoA extender units to synthesize the precursor NOR. The hexanoyl starter unit is provided to the acyl-carrier protein (ACP) domain by the fungal fatty acid synthase hexA/hexB. The second step is the conversion of NOR to averantin (AVN) and requires the norsolorinic acid ketoreductase nor1, which catalyzes the dehydration of norsolorinic acid to form (1'S)-averantin. The cytochrome P450 monooxygenase avnA then catalyzes the hydroxylation of AVN to 5'hydroxyaverantin (HAVN). The next step is performed by adhA that transforms HAVN to averufin (AVF). Averufin might then be converted to hydroxyversicolorone by cypX and avfA. Hydroxyversicolorone is further converted versiconal hemiacetal acetate (VHA) by moxY. VHA is then the substrate for the versiconal hemiacetal acetate esterase est1 to yield versiconal (VAL). Versicolorin B synthase vbsA then converts VAL to versicolorin B (VERB) by closing the bisfuran ring. Then, the activity of the versicolorin B desaturase verB leads to versicolorin A (VERA). DotB, a predicted chloroperoxidase, may perform epoxidation of the A-ring of VERA. Alternatively, a cytochrome P450, such as cypX or avnA could catalyze this step. It is also possible that another, uncharacterized, cytochrome P450 enzyme is responsible for this step. Opening of the epoxide could potentially be achieved by the epoxide hydrolase epoA. However, epoA seems not to be required for DOTH biosynthesis, but other epoxide hydrolases may have the ability to complement this hydrolysis. Alternatively, opening of the epoxide ring could be achieved non-enzymatically. The next step is the deoxygenation of ring A to yield the 5,8-dihydroxyanthraquinone which is most likely catalyzed by the NADPH dehydrogenase encoded by ver1. The last stages of DOTH biosynthesis are proposed to involve hydroxylation of the bisfuran. OrdB and norB might have oxidative roles here. An alternative possibility is that cytochrome P450 monoogenases such as avnA and cypX might perform these steps in addition to previously proposed steps. The sequence is that of Averantin hydroxylase from Dothistroma septosporum (strain NZE10 / CBS 128990) (Red band needle blight fungus).